A 211-amino-acid polypeptide reads, in one-letter code: MLERIANIQKKLSKSIVERKINEVRKVAAVDVSYKEEKARAALVITTFPEGEVLKTKVIETTVSFPYIPTFFFLRETKPILIATKGETFDVLIVEGHGKAHPRGYGLASHIGVVLRKPTIGVAKRLLKNTPKDTYKKVGKVYVSVGNLITLEDATKIIRAILDESGYPKPLKLADKLSKGRIYEVKNTPSPNRSRKKRGNRGKDNNNSQGN.

Mg(2+) contacts are provided by aspartate 31 and glutamate 95. Positions 182–211 (IYEVKNTPSPNRSRKKRGNRGKDNNNSQGN) are disordered.

Belongs to the endonuclease V family. Requires Mg(2+) as cofactor.

The protein localises to the cytoplasm. It catalyses the reaction Endonucleolytic cleavage at apurinic or apyrimidinic sites to products with a 5'-phosphate.. Its function is as follows. DNA repair enzyme involved in the repair of deaminated bases. Selectively cleaves double-stranded DNA at the second phosphodiester bond 3' to a deoxyinosine leaving behind the intact lesion on the nicked DNA. This Pyrococcus horikoshii (strain ATCC 700860 / DSM 12428 / JCM 9974 / NBRC 100139 / OT-3) protein is Endonuclease V.